A 432-amino-acid polypeptide reads, in one-letter code: D-amino acid dehydrogenase (432 aa).

3 to 17 (VVILGSGVVGVTSAW) is an FAD binding site.

Belongs to the DadA oxidoreductase family. It depends on FAD as a cofactor.

It localises to the cell inner membrane. The enzyme catalyses a D-alpha-amino acid + A + H2O = a 2-oxocarboxylate + AH2 + NH4(+). Its pathway is amino-acid degradation; D-alanine degradation; NH(3) and pyruvate from D-alanine: step 1/1. Oxidative deamination of D-amino acids. This is D-amino acid dehydrogenase from Salmonella typhi.